A 79-amino-acid polypeptide reads, in one-letter code: Cytochrome b (79 aa).

Transmembrane regions (helical) follow at residues 1 to 7 (SALFLAM), 31 to 52 (WLIR…YLHI), and 67 to 79 (WNIG…LTMA). Heme b-binding residues include His-37 and His-51.

This sequence belongs to the cytochrome b family. The cytochrome bc1 complex contains 11 subunits: 3 respiratory subunits (MT-CYB, CYC1 and UQCRFS1), 2 core proteins (UQCRC1 and UQCRC2) and 6 low-molecular weight proteins (UQCRH/QCR6, UQCRB/QCR7, UQCRQ/QCR8, UQCR10/QCR9, UQCR11/QCR10 and a cleavage product of UQCRFS1). This cytochrome bc1 complex then forms a dimer. Heme b serves as cofactor.

The protein localises to the mitochondrion inner membrane. In terms of biological role, component of the ubiquinol-cytochrome c reductase complex (complex III or cytochrome b-c1 complex) that is part of the mitochondrial respiratory chain. The b-c1 complex mediates electron transfer from ubiquinol to cytochrome c. Contributes to the generation of a proton gradient across the mitochondrial membrane that is then used for ATP synthesis. The protein is Cytochrome b (MT-CYB) of Dipodomys californicus (California kangaroo rat).